Reading from the N-terminus, the 112-residue chain is Iron-sulfur cluster assembly protein CyaY (112 aa).

Belongs to the frataxin family.

Its function is as follows. Involved in iron-sulfur (Fe-S) cluster assembly. May act as a regulator of Fe-S biogenesis. This Delftia acidovorans (strain DSM 14801 / SPH-1) protein is Iron-sulfur cluster assembly protein CyaY.